A 467-amino-acid polypeptide reads, in one-letter code: tRNA-2-methylthio-N(6)-dimethylallyladenosine synthase (467 aa).

Residues 1–20 (MSDDTTQIEPAMAQETSPRA) are disordered. One can recognise an MTTase N-terminal domain in the interval 23 to 143 (RKVFVKTYGC…LPNALARVRG (121 aa)). Residues Cys-32, Cys-68, Cys-106, Cys-184, Cys-188, and Cys-191 each contribute to the [4Fe-4S] cluster site. A Radical SAM core domain is found at 170-402 (RKRGVSAFLT…QALLSAQQYA (233 aa)). The 63-residue stretch at 405–467 (DSMIGRKMDV…TNSLIAQKLA (63 aa)) folds into the TRAM domain.

This sequence belongs to the methylthiotransferase family. MiaB subfamily. As to quaternary structure, monomer. It depends on [4Fe-4S] cluster as a cofactor.

Its subcellular location is the cytoplasm. The catalysed reaction is N(6)-dimethylallyladenosine(37) in tRNA + (sulfur carrier)-SH + AH2 + 2 S-adenosyl-L-methionine = 2-methylsulfanyl-N(6)-dimethylallyladenosine(37) in tRNA + (sulfur carrier)-H + 5'-deoxyadenosine + L-methionine + A + S-adenosyl-L-homocysteine + 2 H(+). In terms of biological role, catalyzes the methylthiolation of N6-(dimethylallyl)adenosine (i(6)A), leading to the formation of 2-methylthio-N6-(dimethylallyl)adenosine (ms(2)i(6)A) at position 37 in tRNAs that read codons beginning with uridine. In Brucella melitensis biotype 1 (strain ATCC 23456 / CCUG 17765 / NCTC 10094 / 16M), this protein is tRNA-2-methylthio-N(6)-dimethylallyladenosine synthase.